The chain runs to 975 residues: Glycine dehydrogenase (decarboxylating) (975 aa).

K723 is modified (N6-(pyridoxal phosphate)lysine).

This sequence belongs to the GcvP family. In terms of assembly, the glycine cleavage system is composed of four proteins: P, T, L and H. It depends on pyridoxal 5'-phosphate as a cofactor.

It catalyses the reaction N(6)-[(R)-lipoyl]-L-lysyl-[glycine-cleavage complex H protein] + glycine + H(+) = N(6)-[(R)-S(8)-aminomethyldihydrolipoyl]-L-lysyl-[glycine-cleavage complex H protein] + CO2. The glycine cleavage system catalyzes the degradation of glycine. The P protein binds the alpha-amino group of glycine through its pyridoxal phosphate cofactor; CO(2) is released and the remaining methylamine moiety is then transferred to the lipoamide cofactor of the H protein. The protein is Glycine dehydrogenase (decarboxylating) of Burkholderia vietnamiensis (strain G4 / LMG 22486) (Burkholderia cepacia (strain R1808)).